The sequence spans 334 residues: tRNA dimethylallyltransferase (334 aa).

23–30 (GPTGAGKT) lines the ATP pocket. 25 to 30 (TGAGKT) is a binding site for substrate. Interaction with substrate tRNA stretches follow at residues 53 to 56 (DSAL) and 177 to 181 (QRVQR).

It belongs to the IPP transferase family. As to quaternary structure, monomer. It depends on Mg(2+) as a cofactor.

It carries out the reaction adenosine(37) in tRNA + dimethylallyl diphosphate = N(6)-dimethylallyladenosine(37) in tRNA + diphosphate. In terms of biological role, catalyzes the transfer of a dimethylallyl group onto the adenine at position 37 in tRNAs that read codons beginning with uridine, leading to the formation of N6-(dimethylallyl)adenosine (i(6)A). The protein is tRNA dimethylallyltransferase of Polynucleobacter necessarius subsp. necessarius (strain STIR1).